The chain runs to 305 residues: MYNGILPVFKDRGLTSHDVVFKLRKILKTKKVGHTGTLDPEVSGVLPICIGSATKVSDYIMEMGKTYKATVSLGITTTTEDQTGEILEQTAVNEQDVSAKSIDDVLQQFKGELIQIPPMYSSVKVNGKKLYEYARNNQVVERPERKVNIYQINRISDLRFVDDTCQFDMIVECGKGTYIRTLATDIGKALGLPAHMSKLTRTQSGGFDINESLTLEDIKSLHEHDTLLEKLFPIEYGLKGIEQILITDNAIKGKILNGQKFYKAEFKQNIDDIVIMVDNETHKVLAIYEPHPEKLDEIKPKKVFN.

D39 functions as the Nucleophile in the catalytic mechanism.

It belongs to the pseudouridine synthase TruB family. Type 1 subfamily.

It catalyses the reaction uridine(55) in tRNA = pseudouridine(55) in tRNA. Responsible for synthesis of pseudouridine from uracil-55 in the psi GC loop of transfer RNAs. The polypeptide is tRNA pseudouridine synthase B (Staphylococcus saprophyticus subsp. saprophyticus (strain ATCC 15305 / DSM 20229 / NCIMB 8711 / NCTC 7292 / S-41)).